Consider the following 397-residue polypeptide: Vacuolar protein sorting-associated protein 37A (397 aa).

S18 bears the Phosphoserine mark. Residues 308 to 397 (KSTFEKKMQR…AMHSQFHAPL (90 aa)) enclose the VPS37 C-terminal domain.

It belongs to the VPS37 family. In terms of assembly, component of the ESCRT-I complex (endosomal sorting complex required for transport I) which consists of TSG101, VPS28, a VPS37 protein (VPS37A to -D) and MVB12A or MVB12B in a 1:1:1:1 stoichiometry. Interacts with TSG101, VPS28 and HGS. Component of an ESCRT-I complex (endosomal sorting complex required for transport I) which consists of TSG101, VPS28, VPS37A and UBAP1 in a 1:1:1:1 stoichiometry.

It localises to the late endosome membrane. It is found in the nucleus. In terms of biological role, component of the ESCRT-I complex, a regulator of vesicular trafficking process. Required for the sorting of endocytic ubiquitinated cargos into multivesicular bodies. May be involved in cell growth and differentiation. The chain is Vacuolar protein sorting-associated protein 37A (Vps37a) from Mus musculus (Mouse).